The chain runs to 177 residues: Large ribosomal subunit protein uL6 (177 aa).

This sequence belongs to the universal ribosomal protein uL6 family. Part of the 50S ribosomal subunit.

This protein binds to the 23S rRNA, and is important in its secondary structure. It is located near the subunit interface in the base of the L7/L12 stalk, and near the tRNA binding site of the peptidyltransferase center. This is Large ribosomal subunit protein uL6 from Actinobacillus succinogenes (strain ATCC 55618 / DSM 22257 / CCUG 43843 / 130Z).